The following is a 738-amino-acid chain: Propionyl-CoA carboxylase alpha chain, mitochondrial (738 aa).

One can recognise a Biotin carboxylation domain in the interval 62 to 509 (KFDKILIANR…TTKYLPEVYP (448 aa)). Residues Lys177, 209–270 (SREI…PRHI), Glu261, and Asn296 each bind ATP. The ATP-grasp domain maps to 181-378 (KKIATAARVS…IVQQMLRVAY (198 aa)). Residues Glu336, Glu349, and Asn351 each coordinate Mg(2+). 3 residues coordinate Mn(2+): Glu336, Glu349, and Asn351. Residue Arg353 is part of the active site. Phe409 serves as a coordination point for biotin. The 76-residue stretch at 663–738 (KAKVDLSTVV…DEGEVLVELE (76 aa)) folds into the Biotinyl-binding domain. Lys704 carries the N6-biotinyllysine modification.

In terms of assembly, the holoenzyme is a dodecamer composed of 6 alpha subunits and 6 beta subunits. Interacts with sir-2.2. Biotin serves as cofactor. Requires Mg(2+) as cofactor. The cofactor is Mn(2+). Post-translationally, the biotin cofactor is covalently attached to the C-terminal biotinyl-binding domain and is required for the catalytic activity.

The protein localises to the mitochondrion matrix. The enzyme catalyses propanoyl-CoA + hydrogencarbonate + ATP = (S)-methylmalonyl-CoA + ADP + phosphate + H(+). It catalyses the reaction butanoyl-CoA + hydrogencarbonate + ATP = (2S)-ethylmalonyl-CoA + ADP + phosphate + H(+). It participates in metabolic intermediate metabolism; propanoyl-CoA degradation; succinyl-CoA from propanoyl-CoA: step 1/3. Its function is as follows. This is one of the 2 subunits of the biotin-dependent propionyl-CoA carboxylase (PCC), a mitochondrial enzyme involved in the catabolism of odd chain fatty acids, branched-chain amino acids isoleucine, threonine, methionine, and valine and other metabolites. Propionyl-CoA carboxylase catalyzes the carboxylation of propionyl-CoA/propanoyl-CoA to D-methylmalonyl-CoA/(S)-methylmalonyl-CoA. Within the holoenzyme, the alpha subunit catalyzes the ATP-dependent carboxylation of the biotin carried by the biotin carboxyl carrier (BCC) domain, while the beta subunit then transfers the carboxyl group from carboxylated biotin to propionyl-CoA. Propionyl-CoA carboxylase also significantly acts on butyryl-CoA/butanoyl-CoA, which is converted to ethylmalonyl-CoA/(2S)-ethylmalonyl-CoA. Other alternative minor substrates include (2E)-butenoyl-CoA/crotonoyl-CoA. This is Propionyl-CoA carboxylase alpha chain, mitochondrial (pcca-1) from Caenorhabditis briggsae.